We begin with the raw amino-acid sequence, 368 residues long: Probable endopolygalacturonase I (368 aa).

The first 18 residues, 1–18 (MHSYQLLGLAAVGSLVSA), serve as a signal peptide directing secretion. A propeptide spanning residues 19–31 (APAPSRVSEFAKK) is cleaved from the precursor. C35 and C50 form a disulfide bridge. 3 PbH1 repeats span residues 140-161 (VEDS…ISVQ), 162-192 (ATNV…DISE), and 193-214 (STGV…AINS). Catalysis depends on D207, which acts as the Proton donor. C209 and C225 are disulfide-bonded. Residue H229 is part of the active site. 3 PbH1 repeats span residues 244–265 (VKNV…RIKT), 273–295 (VSEI…VIEQ), and 307–352 (STGI…DLSG). N246 carries N-linked (GlcNAc...) asparagine glycosylation. 2 disulfide bridges follow: C335/C340 and C359/C368.

The protein belongs to the glycosyl hydrolase 28 family.

The protein localises to the secreted. It catalyses the reaction (1,4-alpha-D-galacturonosyl)n+m + H2O = (1,4-alpha-D-galacturonosyl)n + (1,4-alpha-D-galacturonosyl)m.. Functionally, involved in maceration and soft-rotting of plant tissue. Hydrolyzes the 1,4-alpha glycosidic bonds of de-esterified pectate in the smooth region of the plant cell wall. This Aspergillus niger (strain ATCC MYA-4892 / CBS 513.88 / FGSC A1513) protein is Probable endopolygalacturonase I (pgaI).